A 395-amino-acid chain; its full sequence is RNA ligase 1 (395 aa).

ATP-binding residues include Tyr-48, Arg-65, and Lys-83. Lys-113 (N6-AMP-lysine intermediate) is an active-site residue. The ATP site is built by Glu-173, Lys-255, and Lys-257. Asp-285 serves as a coordination point for Mg(2+).

Requires Mg(2+) as cofactor. It depends on Mn(2+) as a cofactor.

The enzyme catalyses ATP + (ribonucleotide)n-3'-hydroxyl + 5'-phospho-(ribonucleotide)m = (ribonucleotide)n+m + AMP + diphosphate.. Functionally, RNA ligase that ligates single-stranded nucleic acids in an ATP-dependent manner. Catalyzes both inter- and intra-molecular single-stranded DNA (ssDNA) ligation to &gt;50% completion in a matter of hours at an elevated temperature, although favoring intra-molecular ligation on RNA and single-stranded DNA substrates. Is able to catalyze the adenylation reaction of ssDNA 3'-terminal phosphate (ssDNA 3'p) to 3'-adenylated DNA (ssDNA 3'pp5'A). Does not have significant 3'-adenylation activity with a 3'-phosphorylated nicked dsDNA substrate. This is RNA ligase 1 from Thermus scotoductus.